A 122-amino-acid polypeptide reads, in one-letter code: Sperm-egg fusion protein LLCFC1 (122 aa).

A signal peptide spans 1 to 28 (MPPLAPQLCRAVFLVPILLLLQVKPLNG). Residues 27–51 (NGSPGPKDGSQTEKTPSADQNQEQF) form a disordered region. The segment covering 38-49 (TEKTPSADQNQE) has biased composition (polar residues).

It is found in the secreted. Its function is as follows. Sperm protein required for fusion of sperm with the egg membrane during fertilization. The polypeptide is Sperm-egg fusion protein LLCFC1 (Homo sapiens (Human)).